A 397-amino-acid chain; its full sequence is F-box protein At3g28330 (397 aa).

The 51-residue stretch at Lys-6–Leu-56 folds into the F-box domain.

This chain is F-box protein At3g28330, found in Arabidopsis thaliana (Mouse-ear cress).